The sequence spans 264 residues: Thymidylate synthase (264 aa).

A dUMP-binding site is contributed by arginine 21. Residue histidine 51 coordinates (6R)-5,10-methylene-5,6,7,8-tetrahydrofolate. DUMP is bound at residue arginine 126–arginine 127. The active-site Nucleophile is the cysteine 146. DUMP-binding positions include arginine 166–aspartate 169, asparagine 177, and histidine 207–tyrosine 209. Position 169 (aspartate 169) interacts with (6R)-5,10-methylene-5,6,7,8-tetrahydrofolate. Alanine 263 provides a ligand contact to (6R)-5,10-methylene-5,6,7,8-tetrahydrofolate.

This sequence belongs to the thymidylate synthase family. Bacterial-type ThyA subfamily. In terms of assembly, homodimer.

The protein localises to the cytoplasm. It carries out the reaction dUMP + (6R)-5,10-methylene-5,6,7,8-tetrahydrofolate = 7,8-dihydrofolate + dTMP. Its pathway is pyrimidine metabolism; dTTP biosynthesis. In terms of biological role, catalyzes the reductive methylation of 2'-deoxyuridine-5'-monophosphate (dUMP) to 2'-deoxythymidine-5'-monophosphate (dTMP) while utilizing 5,10-methylenetetrahydrofolate (mTHF) as the methyl donor and reductant in the reaction, yielding dihydrofolate (DHF) as a by-product. This enzymatic reaction provides an intracellular de novo source of dTMP, an essential precursor for DNA biosynthesis. The chain is Thymidylate synthase from Hyphomonas neptunium (strain ATCC 15444).